A 377-amino-acid polypeptide reads, in one-letter code: Chaperone protein DnaJ (377 aa).

Residues Glu5–Gly69 enclose the J domain. The CR-type zinc-finger motif lies at Gly133–Ser215. Cys146, Cys149, Cys163, Cys166, Cys189, Cys192, Cys203, and Cys206 together coordinate Zn(2+). CXXCXGXG motif repeat units follow at residues Cys146–Gly153, Cys163–Gly170, Cys189–Gly196, and Cys203–Gly210.

It belongs to the DnaJ family. Homodimer. It depends on Zn(2+) as a cofactor.

Its subcellular location is the cytoplasm. Functionally, participates actively in the response to hyperosmotic and heat shock by preventing the aggregation of stress-denatured proteins and by disaggregating proteins, also in an autonomous, DnaK-independent fashion. Unfolded proteins bind initially to DnaJ; upon interaction with the DnaJ-bound protein, DnaK hydrolyzes its bound ATP, resulting in the formation of a stable complex. GrpE releases ADP from DnaK; ATP binding to DnaK triggers the release of the substrate protein, thus completing the reaction cycle. Several rounds of ATP-dependent interactions between DnaJ, DnaK and GrpE are required for fully efficient folding. Also involved, together with DnaK and GrpE, in the DNA replication of plasmids through activation of initiation proteins. The sequence is that of Chaperone protein DnaJ from Streptococcus mutans serotype c (strain ATCC 700610 / UA159).